The primary structure comprises 316 residues: tRNA pseudouridine synthase B (316 aa).

Catalysis depends on D47, which acts as the Nucleophile.

Belongs to the pseudouridine synthase TruB family. Type 1 subfamily.

It catalyses the reaction uridine(55) in tRNA = pseudouridine(55) in tRNA. Functionally, responsible for synthesis of pseudouridine from uracil-55 in the psi GC loop of transfer RNAs. The polypeptide is tRNA pseudouridine synthase B (Photobacterium profundum (strain SS9)).